The primary structure comprises 250 residues: Proteasome subunit alpha type-4-1 (250 aa).

Belongs to the peptidase T1A family. In terms of assembly, the 26S proteasome consists of a 20S proteasome core and two 19S regulatory subunits. The 20S proteasome core is composed of 28 subunits that are arranged in four stacked rings, resulting in a barrel-shaped structure. The two end rings are each formed by seven alpha subunits, and the two central rings are each formed by seven beta subunits. The catalytic chamber with the active sites is on the inside of the barrel.

Its subcellular location is the cytoplasm. It is found in the nucleus. Its function is as follows. The proteasome is a multicatalytic proteinase complex which is characterized by its ability to cleave peptides with Arg, Phe, Tyr, Leu, and Glu adjacent to the leaving group at neutral or slightly basic pH. The proteasome has an ATP-dependent proteolytic activity. The sequence is that of Proteasome subunit alpha type-4-1 from Oryza sativa subsp. indica (Rice).